The sequence spans 560 residues: Interferon alpha/beta receptor 1 (560 aa).

Residues 1-24 form the signal peptide; sequence MLSLLGATTLMLVAGRWVLPAASG. At 25–437 the chain is on the extracellular side; it reads EANLKSENVE…EKTKPGNTSK (413 aa). 2 N-linked (GlcNAc...) asparagine glycosylation sites follow: Asn-47 and Asn-55. The cysteines at positions 76 and 84 are disulfide-linked. N-linked (GlcNAc...) asparagine glycans are attached at residues Asn-85, Asn-108, Asn-109, and Asn-172. Fibronectin type-III domains follow at residues 126 to 226, 231 to 329, and 333 to 433; these read QIGP…TTER, SPEN…TEVK, and FPPV…TKPG. Cys-199 and Cys-220 are disulfide-bonded. 5 N-linked (GlcNAc...) asparagine glycosylation sites follow: Asn-222, Asn-285, Asn-313, Asn-359, and Asn-377. An intrachain disulfide couples Cys-283 to Cys-291. The cysteines at positions 404 and 427 are disulfide-linked. Asn-434 carries an N-linked (GlcNAc...) asparagine glycan. The helical transmembrane segment at 438–458 threads the bilayer; it reads TWLIAGICTALFSILVVIYVV. The Cytoplasmic portion of the chain corresponds to 459–560; it reads RVFLRCVKYV…SEEFLQQDSV (102 aa). Residue Cys-464 is the site of S-palmitoyl cysteine attachment. Phosphotyrosine; by TYK2 occurs at positions 467 and 482. Residues 492 to 501 form an important for interaction with TYK2 region; sequence LLSTSEEQTE. Phosphoserine is present on residues Ser-496 and Ser-536. The segment at 524-560 is disordered; it reads VHEEYNSQASQDSGNYSNEDENSGSKISEEFLQQDSV. The segment covering 529-540 has biased composition (polar residues); it reads NSQASQDSGNYS.

This sequence belongs to the type II cytokine receptor family. As to quaternary structure, heterodimer with IFNAR2; forming the receptor for type I interferon. Interacts with TYK2. Interacts with STAT1 and STAT2; the interaction requires its phosphorylation at Tyr-482. Interacts (serine-phosphorylated form) with FBXW11, the substrate recognition component of a SCF (SKP1-CUL1-F-box protein) E3 ubiquitin-protein ligase complex. Interacts with SHMT2; this promotes interaction with ABRAXAS2 and the BRISC complex. Interacts with TRIM10; this interaction prevents association between IFNAR1 and TYK2. Post-translationally, ubiquitinated, leading to its internalization and degradation. Polyubiquitinated via 'Lys-48'-linked and 'Lys-63'-linked ubiquitin chains, leading to receptor internalization and lysosomal degradation. The 'Lys-63'-linked ubiquitin chains are cleaved off by the BRISC complex. In terms of processing, phosphorylated on tyrosine residues in response to interferon-binding: phosphorylation by TYK2 tyrosine kinase creates docking sites for STAT proteins. Phosphorylated on serine residues in response to interferon binding; this promotes interaction with FBXW11 and ubiquitination. Palmitoylation at Cys-464 is required for the activation of STAT1 and STAT2. Expressed in the endometrium. Expressed in all tissues examined except conceptus at day 15 of pregnancy.

Its subcellular location is the cell membrane. The protein resides in the late endosome. It is found in the lysosome. In terms of biological role, together with IFNAR2, forms the heterodimeric receptor for type I interferons (including interferons alpha, beta, epsilon, omega and kappa). Type I interferon binding activates the JAK-STAT signaling cascade, resulting in transcriptional activation or repression of interferon-regulated genes that encode the effectors of the interferon response. Mechanistically, type I interferon-binding brings the IFNAR1 and IFNAR2 subunits into close proximity with one another, driving their associated Janus kinases (JAKs) (TYK2 bound to IFNAR1 and JAK1 bound to IFNAR2) to cross-phosphorylate one another. The activated kinases phosphorylate specific tyrosine residues on the intracellular domains of IFNAR1 and IFNAR2, forming docking sites for the STAT transcription factors. STAT proteins are then phosphorylated by the JAKs, promoting their translocation into the nucleus to regulate expression of interferon-regulated genes. Can also act independently of IFNAR2: form an active IFNB1 receptor by itself and activate a signaling cascade that does not involve activation of the JAK-STAT pathway. The chain is Interferon alpha/beta receptor 1 (IFNAR1) from Ovis aries (Sheep).